We begin with the raw amino-acid sequence, 399 residues long: Acetate kinase (399 aa).

Asn-8 provides a ligand contact to Mg(2+). Lys-15 serves as a coordination point for ATP. Residue Arg-89 participates in substrate binding. Asp-147 functions as the Proton donor/acceptor in the catalytic mechanism. ATP contacts are provided by residues 207 to 211, 284 to 286, and 332 to 336; these read HMGNG, DMR, and GIGEN. Glu-385 is a binding site for Mg(2+).

Belongs to the acetokinase family. In terms of assembly, homodimer. Mg(2+) serves as cofactor. Requires Mn(2+) as cofactor.

The protein resides in the cytoplasm. The enzyme catalyses acetate + ATP = acetyl phosphate + ADP. The protein operates within metabolic intermediate biosynthesis; acetyl-CoA biosynthesis; acetyl-CoA from acetate: step 1/2. Catalyzes the formation of acetyl phosphate from acetate and ATP. Can also catalyze the reverse reaction. This Streptococcus mutans serotype c (strain ATCC 700610 / UA159) protein is Acetate kinase.